A 120-amino-acid chain; its full sequence is Large ribosomal subunit protein uL18 (120 aa).

This sequence belongs to the universal ribosomal protein uL18 family. In terms of assembly, part of the 50S ribosomal subunit; part of the 5S rRNA/L5/L18/L25 subcomplex. Contacts the 5S and 23S rRNAs.

This is one of the proteins that bind and probably mediate the attachment of the 5S RNA into the large ribosomal subunit, where it forms part of the central protuberance. The protein is Large ribosomal subunit protein uL18 of Staphylococcus saprophyticus subsp. saprophyticus (strain ATCC 15305 / DSM 20229 / NCIMB 8711 / NCTC 7292 / S-41).